We begin with the raw amino-acid sequence, 723 residues long: Probable inactive serine/threonine-protein kinase fnkD (723 aa).

The region spanning 33–276 is the Protein kinase domain; the sequence is WEIITQLESN…TTSLPKYSTL (244 aa). 6 FNIP repeats span residues 301–342, 343–384, 385–426, 524–565, 566–606, and 647–690; these read FNQP…ELAS, FNQT…LLSS, FNQP…SLAS, FNQS…ILPS, FNHP…LGDE, and FNIE…FGIT.

It belongs to the protein kinase superfamily. STE Ser/Thr protein kinase family.

The protein is Probable inactive serine/threonine-protein kinase fnkD (fnkD-1) of Dictyostelium discoideum (Social amoeba).